A 278-amino-acid polypeptide reads, in one-letter code: Undecaprenyl-diphosphatase (278 aa).

6 helical membrane-spanning segments follow: residues 49 to 69, 97 to 117, 120 to 140, 197 to 217, 226 to 246, and 258 to 278; these read ANTFKIVIQLGSILAVIVVFW, HVLIGLLPAAVLGLLFEDFID, LFSIDTVIIGLAAGAILMIAA, ADFTFIMAVPIMFGASALSLV, GDLGFYVVGFIASFGFALLSI, and LVPFAIYRLVLAAVLAVIVYM.

The protein belongs to the UppP family.

It is found in the cell membrane. The enzyme catalyses di-trans,octa-cis-undecaprenyl diphosphate + H2O = di-trans,octa-cis-undecaprenyl phosphate + phosphate + H(+). Catalyzes the dephosphorylation of undecaprenyl diphosphate (UPP). Confers resistance to bacitracin. The polypeptide is Undecaprenyl-diphosphatase (Exiguobacterium sibiricum (strain DSM 17290 / CCUG 55495 / CIP 109462 / JCM 13490 / 255-15)).